Reading from the N-terminus, the 110-residue chain is MTTPHSIAESTDPEVFPANNRHLTVSYASSYPEYTRIPAITLKGQWLEDAGFTTGTQVDVRVMNGCIVLTAQQPQPEESELMQSLRQVSKLSARKQKQVQAFIDVMAGSK.

One can recognise a SpoVT-AbrB domain in the interval 29-74; the sequence is SSYPEYTRIPAITLKGQWLEDAGFTTGTQVDVRVMNGCIVLTAQQP.

This sequence belongs to the SymE family.

The protein localises to the cytoplasm. Functionally, involved in the degradation and recycling of damaged RNA. It is itself a target for degradation by the ATP-dependent protease Lon. This chain is Endoribonuclease SymE, found in Salmonella choleraesuis (strain SC-B67).